Reading from the N-terminus, the 241-residue chain is E3 ubiquitin-protein ligase RNF166 (241 aa).

Positions 8–30 (VASSQHRQHHSHQSLATPSSADS) are disordered. The RING-type zinc-finger motif lies at 37 to 77 (CPICLEVYYKPVAIGSCGHTFCGECLQPCLQVSSPLCPLCR). Zn(2+) is bound by residues C102, C105, H117, and C121. The segment at 102-121 (CRGCSKKVTLAKMRAHISSC) adopts a C2HC RNF-type zinc-finger fold. Residues 225–241 (DEEAALQAALALSLSEN) enclose the UIM domain.

The protein localises to the cytoplasm. The enzyme catalyses S-ubiquitinyl-[E2 ubiquitin-conjugating enzyme]-L-cysteine + [acceptor protein]-L-lysine = [E2 ubiquitin-conjugating enzyme]-L-cysteine + N(6)-ubiquitinyl-[acceptor protein]-L-lysine.. It participates in protein modification; protein ubiquitination. E3 ubiquitin-protein ligase that promotes the ubiquitination of different substrates. The sequence is that of E3 ubiquitin-protein ligase RNF166 (rnf166) from Xenopus laevis (African clawed frog).